Here is a 518-residue protein sequence, read N- to C-terminus: Probable inorganic carbon transporter subunit DabB (518 aa).

The next 13 membrane-spanning stretches (helical) occupy residues 3-23 (MQWV…LGSL), 37-57 (ISLL…FEWV), 65-85 (WVGV…IAFV), 114-134 (CVVT…WIAI), 165-185 (AEAC…TWFI), 207-227 (MLLA…GWLI), 242-262 (AGII…IVLS), 264-284 (MAQW…ALVM), 302-322 (MGLM…LHLV), 358-378 (WWFA…LADL), 379-399 (SGPY…IAER), 403-423 (LTSS…VVYT), and 442-462 (WKGD…YFLL).

This sequence belongs to the inorganic carbon transporter (TC 9.A.2) DabB family. Forms a complex with DabA.

The protein localises to the cell inner membrane. Intracellular DIC accumulation is sensitive to CCCP (carbonyl cyanide-m-chlorophenylhydrazone) and DCCD (N,N-dicyclohexylcarbodiimide) and therefore likely driven by either proton gradient, ATP, or both. In terms of biological role, part of an energy-coupled inorganic carbon pump involved in transport of dissolved inorganic carbon (DIC) with downstream gene dabA (Tcr_0854); has been suggested to be a proton-DIC symporter. The sequence is that of Probable inorganic carbon transporter subunit DabB from Hydrogenovibrio crunogenus (strain DSM 25203 / XCL-2) (Thiomicrospira crunogena).